Here is a 310-residue protein sequence, read N- to C-terminus: Iron ABC transporter substrate-binding lipoprotein MtsA (310 aa).

Positions 1-20 (MGKKMSLILGAFLSVFLLVA) are cleaved as a signal peptide. The N-palmitoyl cysteine moiety is linked to residue Cys21. Cys21 is lipidated: S-diacylglycerol cysteine. Residues His68, His140, Glu206, and Asp281 each contribute to the Fe(2+) site.

The protein belongs to the bacterial solute-binding protein 9 family. Lipoprotein receptor antigen (Lrai) subfamily.

The protein resides in the cell membrane. Functionally, part of the ATP-binding cassette (ABC) transport system MtsABC involved in iron import. Binds iron with high affinity and specificity and delivers it to the membrane permease for translocation into the cytoplasm. Has low affinity for Zn(2+) and Cu(2+). This chain is Iron ABC transporter substrate-binding lipoprotein MtsA (mtsA), found in Streptococcus pyogenes serotype M6 (strain ATCC BAA-946 / MGAS10394).